A 127-amino-acid polypeptide reads, in one-letter code: Histone H2B type 1-A (127 aa).

The disordered stretch occupies residues methionine 1–lysine 32. An N-acetylproline modification is found at proline 2. N6-acetyllysine; alternate occurs at positions 7, 13, 14, 17, 18, 22, and 25. N6-crotonyllysine; alternate occurs at positions 7, 13, 14, 17, 18, 22, 25, and 36. An N6-lactoyllysine; alternate mark is found at lysine 7 and lysine 13. A Glycyl lysine isopeptide (Lys-Gly) (interchain with G-Cter in SUMO2); alternate cross-link involves residue lysine 7. N6-lactoyllysine; alternate is present on residues lysine 17, lysine 18, lysine 22, and lysine 25. Lysine 22 is covalently cross-linked (Glycyl lysine isopeptide (Lys-Gly) (interchain with G-Cter in SUMO2); alternate). Residue lysine 36 is modified to N6-succinyllysine; alternate. Lysine 36 is covalently cross-linked (Glycyl lysine isopeptide (Lys-Gly) (interchain with G-Cter in ubiquitin); alternate). Serine 38 is modified (phosphoserine). Lysine 45 carries the post-translational modification N6-lactoyllysine; alternate. Lysine 48 is modified (N6-methyllysine). At lysine 59 the chain carries N6,N6-dimethyllysine. Arginine 81 carries the dimethylated arginine modification. Lysine 87 carries the post-translational modification N6-acetyllysine; alternate. Position 87 is an N6-lactoyllysine; alternate (lysine 87). Residue lysine 87 is modified to N6,N6,N6-trimethyllysine; alternate. Arginine 88 and arginine 94 each carry omega-N-methylarginine. Lysine 110 is subject to N6-lactoyllysine; alternate. Lysine 110 carries the post-translational modification N6-methyllysine. Threonine 117 is modified (phosphothreonine). 2 positions are modified to N6-lactoyllysine; alternate: lysine 118 and lysine 122. An N6-succinyllysine; alternate mark is found at lysine 118 and lysine 122. Position 118 is an N6-methylated lysine; alternate (lysine 118). Lysine 122 participates in a covalent cross-link: Glycyl lysine isopeptide (Lys-Gly) (interchain with G-Cter in ubiquitin); alternate.

Belongs to the histone H2B family. As to quaternary structure, the nucleosome is a histone octamer containing two molecules each of H2A, H2B, H3 and H4 assembled in one H3-H4 heterotetramer and two H2A-H2B heterodimers. In terms of processing, monoubiquitination at Lys-36 by the MSL1/MSL2 dimer is required for histone H3 'Lys-4' (H3K4me) and 'Lys-79' (H3K79me) methylation and transcription activation at specific gene loci, such as HOXA9 and MEIS1 loci. Similarly, monoubiquitination of Lys-122 (H2BK120Ub) by the RNF20/40 complex gives a specific tag for epigenetic transcriptional activation and is also prerequisite for histone H3 'Lys-4' and 'Lys-79' methylation. It also functions cooperatively with the FACT dimer to stimulate elongation by RNA polymerase II. H2BK120Ub also acts as a regulator of mRNA splicing: deubiquitination by USP49 is required for efficient cotranscriptional splicing of a large set of exons. Crotonylation (Kcr) is specifically present in male germ cells and marks testis-specific genes in post-meiotic cells, including X-linked genes that escape sex chromosome inactivation in haploid cells. Crotonylation marks active promoters and enhancers and confers resistance to transcriptional repressors. It is also associated with post-meiotically activated genes on autosomes. Post-translationally, acetylated during spermatogenesis. Acetylated form is most abundant in spermatogonia compared to spermatocytes and round spermatids. In terms of processing, phosphorylated at Thr-117 in spermatogonia, spermatocytes and round spermatids. Methylated at Lys-118 in spermatogonia, spermatocytes and round spermatids. Post-translationally, lactylated in macrophages by EP300/P300 by using lactoyl-CoA directly derived from endogenous or exogenous lactate, leading to stimulates gene transcription. In terms of tissue distribution, testis. Expressed in pachytene spermatocytes during meiotic prophase I in the absence of any significant DNA synthesis.

The protein resides in the nucleus. The protein localises to the chromosome. Functionally, variant histone specifically required to direct the transformation of dissociating nucleosomes to protamine in male germ cells. Entirely replaces classical histone H2B prior nucleosome to protamine transition and probably acts as a nucleosome dissociating factor that creates a more dynamic chromatin, facilitating the large-scale exchange of histones. Core component of nucleosome. Nucleosomes wrap and compact DNA into chromatin, limiting DNA accessibility to the cellular machineries which require DNA as a template. Histones thereby play a central role in transcription regulation, DNA repair, DNA replication and chromosomal stability. DNA accessibility is regulated via a complex set of post-translational modifications of histones, also called histone code, and nucleosome remodeling. The chain is Histone H2B type 1-A from Rattus norvegicus (Rat).